The chain runs to 443 residues: Methyl-coenzyme M reductase II subunit beta (443 aa).

Tyr-367 contributes to the coenzyme M binding site. Residue Gly-369 participates in coenzyme B binding.

Belongs to the methyl-coenzyme M reductase beta subunit family. MCR is a hexamer of two alpha, two beta, and two gamma chains, forming a dimer of heterotrimers. Requires coenzyme F430 as cofactor.

The catalysed reaction is coenzyme B + methyl-coenzyme M = methane + coenzyme M-coenzyme B heterodisulfide. The protein operates within one-carbon metabolism; methyl-coenzyme M reduction; methane from methyl-coenzyme M: step 1/1. Component of the methyl-coenzyme M reductase (MCR) I that catalyzes the reductive cleavage of methyl-coenzyme M (CoM-S-CH3 or 2-(methylthio)ethanesulfonate) using coenzyme B (CoB or 7-mercaptoheptanoylthreonine phosphate) as reductant which results in the production of methane and the mixed heterodisulfide of CoB and CoM (CoM-S-S-CoB). This is the final step in methanogenesis. This chain is Methyl-coenzyme M reductase II subunit beta, found in Methanothermobacter marburgensis (strain ATCC BAA-927 / DSM 2133 / JCM 14651 / NBRC 100331 / OCM 82 / Marburg) (Methanobacterium thermoautotrophicum).